Consider the following 379-residue polypeptide: Succinyl-diaminopimelate desuccinylase (379 aa).

Residue H70 coordinates Zn(2+). D72 is a catalytic residue. D103 serves as a coordination point for Zn(2+). E137 acts as the Proton acceptor in catalysis. Residues E138, E166, and H352 each coordinate Zn(2+).

Belongs to the peptidase M20A family. DapE subfamily. As to quaternary structure, homodimer. Zn(2+) is required as a cofactor. It depends on Co(2+) as a cofactor.

It carries out the reaction N-succinyl-(2S,6S)-2,6-diaminopimelate + H2O = (2S,6S)-2,6-diaminopimelate + succinate. It functions in the pathway amino-acid biosynthesis; L-lysine biosynthesis via DAP pathway; LL-2,6-diaminopimelate from (S)-tetrahydrodipicolinate (succinylase route): step 3/3. In terms of biological role, catalyzes the hydrolysis of N-succinyl-L,L-diaminopimelic acid (SDAP), forming succinate and LL-2,6-diaminopimelate (DAP), an intermediate involved in the bacterial biosynthesis of lysine and meso-diaminopimelic acid, an essential component of bacterial cell walls. This Shewanella putrefaciens (strain CN-32 / ATCC BAA-453) protein is Succinyl-diaminopimelate desuccinylase.